The following is a 220-amino-acid chain: Large ribosomal subunit protein uL4 (220 aa).

The interval alanine 45 to arginine 102 is disordered. A compositionally biased stretch (basic residues) spans glycine 62 to glycine 73.

This sequence belongs to the universal ribosomal protein uL4 family. In terms of assembly, part of the 50S ribosomal subunit.

Its function is as follows. One of the primary rRNA binding proteins, this protein initially binds near the 5'-end of the 23S rRNA. It is important during the early stages of 50S assembly. It makes multiple contacts with different domains of the 23S rRNA in the assembled 50S subunit and ribosome. Functionally, forms part of the polypeptide exit tunnel. The chain is Large ribosomal subunit protein uL4 from Corynebacterium aurimucosum (strain ATCC 700975 / DSM 44827 / CIP 107346 / CN-1) (Corynebacterium nigricans).